Here is a 323-residue protein sequence, read N- to C-terminus: Aldo-keto reductase family 1 member C4 (323 aa).

NADP(+) contacts are provided by residues 20 to 24 and aspartate 50; that span reads GFGTY. Tyrosine 55 functions as the Proton donor in the catalytic mechanism. Histidine 117 is a substrate binding site. Residues 166–167, glutamine 190, 216–221, and 270–280 contribute to the NADP(+) site; these read SN, HSALGT, and KSYNEQRIREN.

The protein belongs to the aldo/keto reductase family. Monomer.

The protein localises to the cytoplasm. The protein resides in the cytosol. The enzyme catalyses chlordecone alcohol + NADP(+) = chlordecone + NADPH + H(+). The catalysed reaction is a 3alpha-hydroxysteroid + NADP(+) = a 3-oxosteroid + NADPH + H(+). It carries out the reaction a 3alpha-hydroxysteroid + NAD(+) = a 3-oxosteroid + NADH + H(+). It catalyses the reaction 5alpha-androstane-3alpha,17beta-diol + NADP(+) = 17beta-hydroxy-5alpha-androstan-3-one + NADPH + H(+). The enzyme catalyses 5alpha-androstane-3beta,17beta-diol + NADP(+) = 17beta-hydroxy-5alpha-androstan-3-one + NADPH + H(+). The catalysed reaction is 5alpha-androstane-3alpha,17beta-diol + NAD(+) = 17beta-hydroxy-5alpha-androstan-3-one + NADH + H(+). It carries out the reaction 17beta-estradiol + NADP(+) = estrone + NADPH + H(+). It catalyses the reaction 17beta-estradiol + NAD(+) = estrone + NADH + H(+). The enzyme catalyses (20S)-hydroxypregn-4-en-3-one + NADP(+) = progesterone + NADPH + H(+). The catalysed reaction is (20S)-hydroxypregn-4-en-3-one + NAD(+) = progesterone + NADH + H(+). It carries out the reaction androsterone + NADP(+) = 5alpha-androstan-3,17-dione + NADPH + H(+). It catalyses the reaction testosterone + NADP(+) = androst-4-ene-3,17-dione + NADPH + H(+). The enzyme catalyses testosterone + NAD(+) = androst-4-ene-3,17-dione + NADH + H(+). The catalysed reaction is 3alpha-hydroxy-5alpha-androstane 17-O-(beta-D-glucuronate) + NADP(+) = 5alpha-dihydrotestosterone 17-O-(beta-D-glucuronate) + NADPH + H(+). It carries out the reaction (3beta,5alpha,17beta)-3-hydroxy-androstan-17-yl sulfate + NADP(+) = 5alpha-dihydrotestosterone sulfate + NADPH + H(+). It catalyses the reaction 5alpha-androstane-3alpha,17beta-diol + NAD(+) = androsterone + NADH + H(+). It functions in the pathway steroid metabolism. Functionally, cytosolic aldo-keto reductase that catalyzes the NADH and NADPH-dependent reduction of ketosteroids to hydroxysteroids. Liver specific enzyme that acts as an NAD(P)(H)-dependent 3-, 17- and 20-ketosteroid reductase on the steroid nucleus and side chain. Displays the ability to catalyze both oxidation and reduction in vitro, but most probably acts as a reductase in vivo since the oxidase activity measured in vitro is inhibited by physiological concentration of NADPH. Acts preferentially as a 3-alpha-hydroxysteroid dehydrogenase (HSD) with a subsidiary 3-beta-HSD activity. Catalyzes efficiently the transformation of the potent androgen 5-alpha-dihydrotestosterone (5alpha-DHT or 17beta-hydroxy-5alpha-androstan-3-one) into the less active form, 5-alpha-androstan-3-alpha,17-beta-diol (3-alpha-diol). Catalyzes the reduction of estrone into 17beta-estradiol but with low efficiency. Metabolizes a broad spectrum of natural and synthetic therapeutic steroid and plays an important role in metabolism of androgens, estrogens, progestereone and conjugated steroids. Catalyzes the biotransformation of the pesticide chlordecone (kepone) to its corresponding alcohol leading to increased biliary excretion of the pesticide and concomitant reduction of its neurotoxicity since bile is the major excretory route. This chain is Aldo-keto reductase family 1 member C4 (AKR1C4), found in Macaca fascicularis (Crab-eating macaque).